A 349-amino-acid polypeptide reads, in one-letter code: MEVFIDLKTCEDRSYSIYIDPIQSIRLSSKTAIVTNPKVAGLHLKYLLNKIEAPELYIITLPDGEDYKNQETLDFLLDRLFDHKLDRKSVLIAFGGGVIGDMTGFAASVFQRGIDFIQIPTTLLSQVDASVGGKTGINNRFGKNLIGAFHQPKAVYIDTHFLQTLPQREFSAGVAEIVKMAVVFDKDFFEWLMKNDLKEEDNLKYAIKRSVELKAAIVAKDEREGGVRASLNYGHTFAHVIENETGYKRFLHGEAVAIGMVMANELAVKTGLLSREDAEKIKNLLQRYNLPVCYEVEDPEDFYEHFFLDKKTQNDTIKFVLPKDIGDFVITDTIKKDQIIDVLREFERC.

NAD(+) is bound by residues 63-68, 97-101, 121-122, lysine 134, lysine 143, and 161-164; these read DGEDYK, GVIGD, TT, and FLQT. Zn(2+)-binding residues include glutamate 176, histidine 235, and histidine 252.

Belongs to the sugar phosphate cyclases superfamily. Dehydroquinate synthase family. It depends on Co(2+) as a cofactor. The cofactor is Zn(2+). Requires NAD(+) as cofactor.

It is found in the cytoplasm. It carries out the reaction 7-phospho-2-dehydro-3-deoxy-D-arabino-heptonate = 3-dehydroquinate + phosphate. It participates in metabolic intermediate biosynthesis; chorismate biosynthesis; chorismate from D-erythrose 4-phosphate and phosphoenolpyruvate: step 2/7. Its function is as follows. Catalyzes the conversion of 3-deoxy-D-arabino-heptulosonate 7-phosphate (DAHP) to dehydroquinate (DHQ). The chain is 3-dehydroquinate synthase from Nitratiruptor sp. (strain SB155-2).